Consider the following 99-residue polypeptide: NADH-quinone oxidoreductase subunit K 1 (99 aa).

The next 3 helical transmembrane spans lie at 3–23 (PVNY…GVLV), 28–48 (IVVF…LVTF), and 59–79 (IVAF…LAII).

Belongs to the complex I subunit 4L family. In terms of assembly, NDH-1 is composed of 14 different subunits. Subunits NuoA, H, J, K, L, M, N constitute the membrane sector of the complex.

It is found in the cell membrane. It carries out the reaction a quinone + NADH + 5 H(+)(in) = a quinol + NAD(+) + 4 H(+)(out). Its function is as follows. NDH-1 shuttles electrons from NADH, via FMN and iron-sulfur (Fe-S) centers, to quinones in the respiratory chain. The immediate electron acceptor for the enzyme in this species is believed to be a menaquinone. Couples the redox reaction to proton translocation (for every two electrons transferred, four hydrogen ions are translocated across the cytoplasmic membrane), and thus conserves the redox energy in a proton gradient. The polypeptide is NADH-quinone oxidoreductase subunit K 1 (Streptomyces griseus subsp. griseus (strain JCM 4626 / CBS 651.72 / NBRC 13350 / KCC S-0626 / ISP 5235)).